A 356-amino-acid polypeptide reads, in one-letter code: Peptide chain release factor 1 (356 aa).

The residue at position 233 (Gln-233) is an N5-methylglutamine.

This sequence belongs to the prokaryotic/mitochondrial release factor family. Methylated by PrmC. Methylation increases the termination efficiency of RF1.

The protein localises to the cytoplasm. Its function is as follows. Peptide chain release factor 1 directs the termination of translation in response to the peptide chain termination codons UAG and UAA. This chain is Peptide chain release factor 1, found in Endomicrobium trichonymphae.